Consider the following 989-residue polypeptide: Protease PrtH (989 aa).

2 consecutive repeats follow at residues 270–323 (TPTD…KCVN) and 528–581 (SPAS…VCVD). The interval 969 to 989 (PRDTPWRYGKRELPPSASGMR) is disordered.

The protein belongs to the peptidase C25 family.

It localises to the cytoplasmic vesicle. Its function is as follows. Cleaves human complement component C3. May enable P.gingivalis to evade complement-mediated killing during the immune response. Plays an important role in soft tissue infections and is a virulence factor. The protein is Protease PrtH (prtH) of Porphyromonas gingivalis (strain ATCC BAA-308 / W83).